The sequence spans 133 residues: Large ribosomal subunit protein bL20 (133 aa).

Belongs to the bacterial ribosomal protein bL20 family.

In terms of biological role, binds directly to 23S ribosomal RNA and is necessary for the in vitro assembly process of the 50S ribosomal subunit. It is not involved in the protein synthesizing functions of that subunit. This Rubrobacter xylanophilus (strain DSM 9941 / JCM 11954 / NBRC 16129 / PRD-1) protein is Large ribosomal subunit protein bL20.